A 435-amino-acid chain; its full sequence is NADH-quinone oxidoreductase subunit D (435 aa).

It belongs to the complex I 49 kDa subunit family. In terms of assembly, NDH-1 is composed of 14 different subunits. Subunits NuoB, C, D, E, F, and G constitute the peripheral sector of the complex.

Its subcellular location is the cell inner membrane. It catalyses the reaction a quinone + NADH + 5 H(+)(in) = a quinol + NAD(+) + 4 H(+)(out). Functionally, NDH-1 shuttles electrons from NADH, via FMN and iron-sulfur (Fe-S) centers, to quinones in the respiratory chain. The immediate electron acceptor for the enzyme in this species is believed to be ubiquinone. Couples the redox reaction to proton translocation (for every two electrons transferred, four hydrogen ions are translocated across the cytoplasmic membrane), and thus conserves the redox energy in a proton gradient. In Xanthomonas euvesicatoria pv. vesicatoria (strain 85-10) (Xanthomonas campestris pv. vesicatoria), this protein is NADH-quinone oxidoreductase subunit D.